A 69-amino-acid chain; its full sequence is Conopeptide Y-Pl1 (69 aa).

Residues 1-20 (MSKLGVVLFVFLLLLPLAAP) form the signal peptide. The propeptide occupies 21-69 (QPVGDQPADQPADRNAEARARFLHPFQYYTLYRYLTRFLHRYPIYYIRY).

This sequence belongs to the conotoxin M superfamily. Conopeptide Y family. In terms of tissue distribution, expressed by the venom duct.

It is found in the secreted. Functionally, tyrosine-rich conopeptide that targets several channels/receptors that are expressed in Xenopus oocytes. These targets are the voltage-gated potassium channels Kv1.6/KCNA6 (IC(50) is 170 nM) and Kv1.2/KCNA2 (IC(50) is 2.0 uM), Nav1.2/SCN2A (30% of inhibition), and N-methyl-D-aspartate (NMDA) receptor (GRIN1/GRIN2A/GRIN3B and GRIN1/GRIN2B/GRIN3B) (15% of inhibition). In vivo, causes the marine worm N.virens to move very slowly in contrast to control worms, and causes seizures (at 5 nmol) and death (20 nmol) to mice when intracranially injected. The chain is Conopeptide Y-Pl1 from Conus planorbis (Planorbis cone).